A 689-amino-acid chain; its full sequence is Dipeptidyl aminopeptidase BIII (689 aa).

The N-terminal stretch at 1-26 (MRHPAFRLTLLASTVAFALAPQAAQA) is a signal peptide. Active-site charge relay system residues include Ser-506, Asp-593, and His-625.

Belongs to the peptidase S9C family. Monomer.

With respect to regulation, strongly inhibited by the serine protease inhibitor diisopropyl fluorophosphate (DFP), chymostatin, leupeptin, 0.5 mM ZnCl(2), 10 mM o-phenanthlorine and N-tosyl-L-phenyl-alanyl chloromethyl ketone (TPCK), but not by N-tosyl-L-lysyl chloromethyl ketone (TLCK). Activity is not affected significantly by iodoacetate (IAA), L-trans-epoxysuccinyl-leucylamido(4-guanido)butane (E64), pepstatin A and phenylmethanesulfonyl fluoride (PMSF). Activity is stimulated by addition of 0.5 mM CaCl(2), 10 mM EDTA and N-ethylmaleimide (NEM). Functionally, exopeptidase that catalyzes the removal of dipeptide units (NH2-P2-P1- or -P1'-P2'-COOH) from the free amino or carboxy termini. Prefers substrates composed of bulky, hydrophobic amino acids at P1 and P1' positions. Has endopeptidase activity on N-terminally blocked peptide derivatives which contain aromatic amino acid residue at the P1 position. Exopeptidase activity is much higher than its endopeptidase activity. The protein is Dipeptidyl aminopeptidase BIII of Pseudoxanthomonas mexicana.